Reading from the N-terminus, the 493-residue chain is MLAATVLTLALLGNVHACSKGTSHKAGIVCRITKPALLVLNQETAKVIQSAFQRANYPNITGEKAMMLLGQVKYGLHNIQISHLSIASSRVELVEAKSIDVSIQNVSVVFKGTLKYGYTTAWGLGIDQSVDFEIDSAIDLQINTQLTCDSGRVRTDAPDCYLSFHKLLLHLQGEREPGWIKQLFTNFISFTLKLVLKGQICKEINIISNIMADFVQTRAASILSDGDIGVDISLTGDPIITASYLESHHKGYFIYKNVSEDLPLPTFSPALLGDSRMLYFWFSEQVFHSLAKVAFQDGRLMLSLMGDEFKAVLETWGFNTNQEIFQEVVGGFPSQAQVTVHCLKMPRISCQNKGVVVNSSVMVKFLFPRPDQQHSVAYTFEEDIMTTVQASYSKKKLFLSLLDFQITPKTVSNLTESSSESVQSFLQSMITTVGIPEVMSRLEAVFTALMNSKGLSLFDIINPEIITRDGFLLLQMDFGFPEHLLVDFLQSLS.

An N-terminal signal peptide occupies residues 1 to 17; that stretch reads MLAATVLTLALLGNVHA. N-linked (GlcNAc...) asparagine glycosylation is found at asparagine 59 and asparagine 105. The cysteines at positions 160 and 201 are disulfide-linked. N-linked (GlcNAc...) asparagine glycosylation is found at asparagine 257, asparagine 358, and asparagine 413.

Belongs to the BPI/LBP/Plunc superfamily. BPI/LBP family. Probably primarily expressed in liver and adipose tissues. Detected in adrenal gland, mesenteric fat, spleen and aorta.

It localises to the secreted. It carries out the reaction cholesteryl (9Z-octadecenoate)(in) = cholesteryl (9Z-octadecenoate)(out). The catalysed reaction is 1,2,3-tri-(9Z-octadecenoyl)-glycerol(in) = 1,2,3-tri-(9Z-octadecenoyl)-glycerol(out). It catalyses the reaction cholesteryl (9Z,12Z)-octadecadienoate(in) = cholesteryl (9Z,12Z)-octadecadienoate(out). Its function is as follows. Involved in the transfer of neutral lipids, including cholesteryl ester and triglyceride, among lipoprotein particles. Allows the net movement of cholesteryl ester from high density lipoproteins/HDL to triglyceride-rich very low density lipoproteins/VLDL, and the equimolar transport of triglyceride from VLDL to HDL. Regulates the reverse cholesterol transport, by which excess cholesterol is removed from peripheral tissues and returned to the liver for elimination. The protein is Cholesteryl ester transfer protein of Macaca fascicularis (Crab-eating macaque).